Reading from the N-terminus, the 736-residue chain is Gephyrin (736 aa).

The segment at 14-166 (QIRVGVLTVS…FILPALPHAI (153 aa)) is MPT Mo-transferase. The interaction with GABARAP stretch occupies residues 140–316 (LIINLPGSKK…VDITKVARRH (177 aa)). Disordered stretches follow at residues 181 to 232 (DELE…DSSS) and 260 to 290 (TASLSTTPSESPRAQATSRLSTASCPTPKVQ). Over residues 187–199 (PSPPPPLSPPPTT) the composition is skewed to pro residues. Ser-188 and Ser-194 each carry phosphoserine. Thr-198 bears the Phosphothreonine mark. A Phosphoserine modification is found at Ser-200. Cys-212 is lipidated: S-palmitoyl cysteine. Over residues 261–290 (ASLSTTPSESPRAQATSRLSTASCPTPKVQ) the composition is skewed to polar residues. Phosphoserine is present on Ser-262. 2 positions are modified to phosphothreonine: Thr-265 and Thr-266. A phosphoserine mark is found at Ser-268 and Ser-270. Cys-284 carries the S-palmitoyl cysteine lipid modification. At Ser-305 the chain carries Phosphoserine. An MPT adenylyltransferase region spans residues 326 to 736 (MDKAFITVLE…VVDVMVIGRL (411 aa)).

In the N-terminal section; belongs to the MoaB/Mog family. This sequence in the C-terminal section; belongs to the MoeA family. In terms of assembly, homotrimer, homodimer and homooligomer. Interacts with GABARAP. Interacts with SRGAP2 (via SH3 domain). Interacts with GABRA3. Interacts with GLRB. GABRA3 and GLRB occupy overlapping binding sites. Interacts with ARHGAP32; IQSEC3, INSYN1 and INSYN2A. The cofactor is Mg(2+). Post-translationally, palmitoylated. Palmitoylation is stimulated by GABA type A receptors activity. Palmitoylation by ZDHHC12 regulates clustering at synapses.

Its subcellular location is the postsynaptic cell membrane. It localises to the cell membrane. The protein resides in the cytoplasm. The protein localises to the cytosol. It is found in the cytoskeleton. Its subcellular location is the cell projection. It localises to the dendrite. The protein resides in the postsynaptic density. It catalyses the reaction molybdopterin + ATP + H(+) = adenylyl-molybdopterin + diphosphate. It carries out the reaction adenylyl-molybdopterin + molybdate = Mo-molybdopterin + AMP + H(+). Its pathway is cofactor biosynthesis; molybdopterin biosynthesis. Its activity is regulated as follows. Inhibited by copper and tungsten. Functionally, microtubule-associated protein involved in membrane protein-cytoskeleton interactions. It is thought to anchor the inhibitory glycine receptor (GLYR) to subsynaptic microtubules. Acts as a major instructive molecule at inhibitory synapses, where it also clusters GABA type A receptors. In terms of biological role, also has a catalytic activity and catalyzes two steps in the biosynthesis of the molybdenum cofactor. In the first step, molybdopterin is adenylated. Subsequently, molybdate is inserted into adenylated molybdopterin and AMP is released. This is Gephyrin from Homo sapiens (Human).